Reading from the N-terminus, the 194-residue chain is Cation channel sperm-associated auxiliary subunit zeta (194 aa).

In terms of assembly, component of the CatSper complex or CatSpermasome composed of the core pore-forming members CATSPER1, CATSPER2, CATSPER3 and CATSPER4 as well as auxiliary members CATSPERB, CATSPERG2, CATSPERD, CATSPERE, CATSPERZ, C2CD6/CATSPERT, SLCO6C1, TMEM249, TMEM262 and EFCAB9. HSPA1 may be an additional auxiliary complex member. The core complex members CATSPER1, CATSPER2, CATSPER3 and CATSPER4 form a heterotetrameric channel. The auxiliary CATSPERB, CATSPERG2, CATSPERD and CATSPERE subunits form a pavilion-like structure over the pore which stabilizes the complex through interactions with CATSPER4, CATSPER3, CATSPER1 and CATSPER2 respectively. SLCO6C1 interacts with CATSPERE and TMEM262/CATSPERH interacts with CATSPERB, further stabilizing the complex. C2CD6/CATSPERT interacts at least with CATSPERD and is required for targeting the CatSper complex in the flagellar membrane. Interacts with EFCAB9; the interaction is direct, Ca(2+)-dependent and connects EFCAB9 with the CatSper complex. Dissociates from EFCAB9 at elevated pH. As to expression, testis-specific. Expressed in adult but not in fetal testis. Not expressed in ovary. Within testis, expression is restricted to spermatids.

The protein localises to the cell projection. It is found in the cilium. The protein resides in the flagellum membrane. In terms of biological role, auxiliary component of the CatSper complex, a complex involved in sperm cell hyperactivation. Sperm cell hyperactivation is needed for sperm motility which is essential late in the preparation of sperm for fertilization. Required for a distribution of the CatSper complex in linear quadrilateral nanodomains along the flagellum, maximizing fertilization inside the mammalian female reproductive tract. Together with EFCAB9, associates with the CatSper channel pore and is required for the two-row structure of each single CatSper channel. In Mus musculus (Mouse), this protein is Cation channel sperm-associated auxiliary subunit zeta.